Here is a 451-residue protein sequence, read N- to C-terminus: Chromosomal replication initiator protein DnaA (451 aa).

A domain I, interacts with DnaA modulators region spans residues 1 to 94 (MKPDLSSLWQ…KPEPKPAQPS (94 aa)). Positions 87–106 (EPKPAQPSALPTHHNKEENK) are disordered. Residues 95-113 (ALPTHHNKEENKPQTVIRS) are domain II. The segment at 114 to 331 (YLNPKHVFEN…GALNRVSANA (218 aa)) is domain III, AAA+ region. Residues Gly-159, Gly-161, Lys-162, and Thr-163 each contribute to the ATP site. Residues 332–451 (EFMGAAITID…WSNLIRTLSV (120 aa)) are domain IV, binds dsDNA.

The protein belongs to the DnaA family. As to quaternary structure, oligomerizes as a right-handed, spiral filament on DNA at oriC.

The protein localises to the cytoplasm. Its function is as follows. Plays an essential role in the initiation and regulation of chromosomal replication. ATP-DnaA binds to the origin of replication (oriC) to initiate formation of the DNA replication initiation complex once per cell cycle. Binds the DnaA box (a 9 base pair repeat at the origin) and separates the double-stranded (ds)DNA. Forms a right-handed helical filament on oriC DNA; dsDNA binds to the exterior of the filament while single-stranded (ss)DNA is stabiized in the filament's interior. The ATP-DnaA-oriC complex binds and stabilizes one strand of the AT-rich DNA unwinding element (DUE), permitting loading of DNA polymerase. After initiation quickly degrades to an ADP-DnaA complex that is not apt for DNA replication. Binds acidic phospholipids. The protein is Chromosomal replication initiator protein DnaA of Pasteurella multocida (strain Pm70).